The chain runs to 63 residues: UPF0512 protein X (63 aa).

The protein belongs to the UPF0512 family.

This chain is UPF0512 protein X, found in Dictyostelium discoideum (Social amoeba).